The primary structure comprises 706 residues: Elongation factor G (706 aa).

The 283-residue stretch at 8–290 (KRYRNIGIVA…GVIEYMPSPT (283 aa)) folds into the tr-type G domain. Residues 17–24 (AHVDAGKT), 88–92 (DTPGH), and 142–145 (NKMD) each bind GTP.

It belongs to the TRAFAC class translation factor GTPase superfamily. Classic translation factor GTPase family. EF-G/EF-2 subfamily.

The protein resides in the cytoplasm. Catalyzes the GTP-dependent ribosomal translocation step during translation elongation. During this step, the ribosome changes from the pre-translocational (PRE) to the post-translocational (POST) state as the newly formed A-site-bound peptidyl-tRNA and P-site-bound deacylated tRNA move to the P and E sites, respectively. Catalyzes the coordinated movement of the two tRNA molecules, the mRNA and conformational changes in the ribosome. The chain is Elongation factor G from Chromohalobacter salexigens (strain ATCC BAA-138 / DSM 3043 / CIP 106854 / NCIMB 13768 / 1H11).